Here is a 767-residue protein sequence, read N- to C-terminus: Serine/threonine-protein kinase DCLK2 (767 aa).

Residues Met1–Leu44 form a disordered region. Basic and acidic residues predominate over residues Ile7 to Pro19. The segment covering Arg24–Gly43 has biased composition (low complexity). A Phosphothreonine modification is found at Thr61. 2 consecutive Doublecortin domains span residues Lys72 to Thr158 and Lys196 to Asp279. Residues Lys301–Ser311 are compositionally biased toward low complexity. The tract at residues Lys301–Pro391 is disordered. A compositionally biased stretch (polar residues) spans Ser327 to Gly338. Residues Thr339–Ser362 show a composition bias toward low complexity. Polar residues predominate over residues Ile369 to Asn380. The residue at position 377 (Ser377) is a Phosphoserine. Residues Tyr409–Val666 enclose the Protein kinase domain. ATP-binding positions include Ile415–Val423 and Lys438. Asp530 serves as the catalytic Proton acceptor. A Phosphoserine modification is found at Ser662. The residue at position 681 (Thr681) is a Phosphothreonine. Basic and acidic residues predominate over residues His721–Ser734. The disordered stretch occupies residues His721–Asp767. Pro residues predominate over residues Ala738–Pro751.

The protein belongs to the protein kinase superfamily. CAMK Ser/Thr protein kinase family. CaMK subfamily. As to quaternary structure, interacts with MAPK8IP1/JIP-1, MAPK8IP2/JIP-2, MAPK9/JNK2, PPP1R9B/NEURABIN-2 and actin. Binds to and stabilizes microtubules; binding affinity is strongly reduced by autophosphorylation. Autophosphorylated.

Its subcellular location is the cytoplasm. The protein localises to the cytoskeleton. The enzyme catalyses L-seryl-[protein] + ATP = O-phospho-L-seryl-[protein] + ADP + H(+). It catalyses the reaction L-threonyl-[protein] + ATP = O-phospho-L-threonyl-[protein] + ADP + H(+). In terms of biological role, protein kinase with a significantly reduced Ca(2+)+/CAM affinity and dependence compared to other members of the CaMK family. May play a role in the down-regulation of CRE-dependent gene activation probably by phosphorylation of the CREB coactivator CRTC2/TORC2 and the resulting retention of TORC2 in the cytoplasm. The chain is Serine/threonine-protein kinase DCLK2 (Dclk2) from Rattus norvegicus (Rat).